Consider the following 391-residue polypeptide: S-adenosylmethionine synthase (391 aa).

Residues 1 to 20 (MPRSDYLFTSESVSEGHPDK) form a disordered region. Position 17 (His17) interacts with ATP. Residue Asp19 coordinates Mg(2+). Glu45 serves as a coordination point for K(+). L-methionine-binding residues include Glu58 and Gln102. The segment at 102–112 (QSADIAQGVDA) is flexible loop. ATP-binding positions include 169-171 (DAK), 235-236 (KF), Asp244, 250-251 (RK), Ala267, and Lys271. Asp244 is a binding site for L-methionine. Lys275 contacts L-methionine.

The protein belongs to the AdoMet synthase family. In terms of assembly, homotetramer; dimer of dimers. It depends on Mg(2+) as a cofactor. K(+) is required as a cofactor.

It is found in the cytoplasm. The catalysed reaction is L-methionine + ATP + H2O = S-adenosyl-L-methionine + phosphate + diphosphate. Its pathway is amino-acid biosynthesis; S-adenosyl-L-methionine biosynthesis; S-adenosyl-L-methionine from L-methionine: step 1/1. Its function is as follows. Catalyzes the formation of S-adenosylmethionine (AdoMet) from methionine and ATP. The overall synthetic reaction is composed of two sequential steps, AdoMet formation and the subsequent tripolyphosphate hydrolysis which occurs prior to release of AdoMet from the enzyme. This chain is S-adenosylmethionine synthase, found in Methylorubrum populi (strain ATCC BAA-705 / NCIMB 13946 / BJ001) (Methylobacterium populi).